The sequence spans 270 residues: 5'-AMP-activated protein kinase subunit beta-1 (270 aa).

The interval 1 to 44 is disordered; that stretch reads MGNTSSERAALDRQGGHKTPRRDSSGGSKDGDRPKILMDSPEDA. The N-myristoyl glycine moiety is linked to residue Gly-2. Phosphothreonine is present on Thr-4. Phosphoserine occurs at positions 5 and 6. Basic and acidic residues predominate over residues 9 to 36; the sequence is AALDRQGGHKTPRRDSSGGSKDGDRPKI. Thr-19 carries the post-translational modification Phosphothreonine. 2 positions are modified to phosphoserine; by autocatalysis: Ser-24 and Ser-25. 3 positions are modified to phosphoserine: Ser-40, Ser-96, and Ser-101. The segment at 68-163 is glycogen-binding domain; it reads EVNDKAPAQA…QVKKTDFEVF (96 aa). The residue at position 108 (Ser-108) is a Phosphoserine; by autocatalysis. Thr-148 is modified (phosphothreonine). Ser-182 carries the post-translational modification Phosphoserine. Lys-201 carries the post-translational modification N6-succinyllysine.

This sequence belongs to the 5'-AMP-activated protein kinase beta subunit family. AMPK is a heterotrimer of an alpha catalytic subunit (PRKAA1 or PRKAA2), a beta (PRKAB1 or PRKAB2) and a gamma non-catalytic subunits (PRKAG1, PRKAG2 or PRKAG3). Interacts with FNIP1 and FNIP2. In terms of processing, phosphorylated when associated with the catalytic subunit (PRKAA1 or PRKAA2). Phosphorylated by ULK1; leading to negatively regulate AMPK activity and suggesting the existence of a regulatory feedback loop between ULK1 and AMPK.

Non-catalytic subunit of AMP-activated protein kinase (AMPK), an energy sensor protein kinase that plays a key role in regulating cellular energy metabolism. In response to reduction of intracellular ATP levels, AMPK activates energy-producing pathways and inhibits energy-consuming processes: inhibits protein, carbohydrate and lipid biosynthesis, as well as cell growth and proliferation. AMPK acts via direct phosphorylation of metabolic enzymes, and by longer-term effects via phosphorylation of transcription regulators. Also acts as a regulator of cellular polarity by remodeling the actin cytoskeleton; probably by indirectly activating myosin. Beta non-catalytic subunit acts as a scaffold on which the AMPK complex assembles, via its C-terminus that bridges alpha (PRKAA1 or PRKAA2) and gamma subunits (PRKAG1, PRKAG2 or PRKAG3). The protein is 5'-AMP-activated protein kinase subunit beta-1 (PRKAB1) of Bos taurus (Bovine).